Here is a 361-residue protein sequence, read N- to C-terminus: Adenosine kinase (361 aa).

Positions proline 7–glutamate 15 match the Nuclear localization signal motif. Aspartate 34 is an adenosine binding site. Serine 48 is a binding site for Mg(2+). Phosphotyrosine is present on tyrosine 76. Residue asparagine 147 coordinates Mg(2+). Residue glutamine 305 participates in adenosine binding. The active site involves aspartate 316. Residue aspartate 316 is the Proton acceptor of the active site.

This sequence belongs to the carbohydrate kinase PfkB family. Monomer. It depends on Mg(2+) as a cofactor. In terms of tissue distribution, widely expressed. Highly expressed in liver, testis, kidney and spleen (at protein level). In brain, expression in most forebrain structures and the cerebellum is higher than in the midbrain and brainstem (at protein level). As to expression, major isoform in testis and kidney. Not detected in most brain regions, except in the cerebellum, where it is expressed at a similar level to that of isoform 2 (at protein level). Major isoform in spleen and in most brain regions, except in the cerebellum, where it is expressed at a similar level to that of isoform 1 (at protein level).

It is found in the nucleus. The protein resides in the cytoplasm. The enzyme catalyses adenosine + ATP = AMP + ADP + H(+). Its pathway is purine metabolism; AMP biosynthesis via salvage pathway; AMP from adenosine: step 1/1. Its activity is regulated as follows. Activity is inhibited by 5-iodotubercidin and 5'-amino-5'-deoxyadenosine. In terms of biological role, catalyzes the phosphorylation of the purine nucleoside adenosine at the 5' position in an ATP-dependent manner. Serves as a potential regulator of concentrations of extracellular adenosine and intracellular adenine nucleotides. The chain is Adenosine kinase (Adk) from Mus musculus (Mouse).